Reading from the N-terminus, the 362-residue chain is Major capsid protein VP1 (362 aa).

Positions K5–K19 match the Bipartite nuclear localization signal motif. Phosphothreonine; by host is present on T338.

This sequence belongs to the polyomaviruses coat protein VP1 family. As to quaternary structure, homomultimer; disulfide-linked. The virus capsid is composed of 72 icosahedral units, each one composed of five disulfide-linked copies of VP1. Interacts with minor capsid proteins VP2 and VP3.

The protein resides in the virion. Its subcellular location is the host nucleus. Forms an icosahedral capsid with a T=7 symmetry and a 40 nm diameter. The capsid is composed of 72 pentamers linked to each other by disulfide bonds and associated with VP2 or VP3 proteins. Interacts with sialic acids on the cell surface to provide virion attachment to target cell. Once attached, the virion is internalized by endocytosis and traffics to the endoplasmic reticulum. Inside the endoplasmic reticulum, the protein folding machinery isomerizes VP1 interpentamer disulfide bonds, thereby triggering initial uncoating. Next, the virion uses the endoplasmic reticulum-associated degradation machinery to probably translocate in the cytosol before reaching the nucleus. Nuclear entry of the viral DNA involves the selective exposure and importin recognition of VP2/Vp3 nuclear localization signal. In late phase of infection, neo-synthesized VP1 encapsulates replicated genomic DNA in the nucleus, and participates in rearranging nucleosomes around the viral DNA. This Simian virus 12 (strain wt100) (SV-12) protein is Major capsid protein VP1.